A 969-amino-acid chain; its full sequence is Rab3 GTPase-activating protein catalytic subunit (969 aa).

Residues 532–549 are compositionally biased toward basic and acidic residues; sequence DDGKKSSSSDGARDRSRG. The segment at 532 to 613 is disordered; it reads DDGKKSSSSD…PEGRLQPHGT (82 aa). Residues 550–572 are compositionally biased toward low complexity; sequence APEGAGPEGAGPAEAAGKSWDSW. Acidic residues predominate over residues 573 to 589; the sequence is SDSEDEFFECVSDTEEM. Over residues 590–608 the composition is skewed to basic and acidic residues; sequence KEDKEEAENRSRSKPEGRL.

This sequence belongs to the Rab3-GAP catalytic subunit family. In terms of assembly, the Rab3 GTPase-activating complex is a heterodimer composed of rab3gap1 and rab3gap2. The Rab3 GTPase-activating complex interacts with DMXL2. Interacts with LMAN1.

It localises to the cytoplasm. It is found in the endoplasmic reticulum. The protein resides in the golgi apparatus. Its subcellular location is the cis-Golgi network. Functionally, catalytic subunit of the Rab3 GTPase-activating (Rab3GAP) complex composed of rab3gap1 and rab3gap2, which has GTPase-activating protein (GAP) activity towards various Rab3 subfamily members (RAB3A, RAB3B, RAB3C and RAB3D), RAB5A and RAB43, and guanine nucleotide exchange factor (GEF) activity towards RAB18. As part of the Rab3GAP complex, acts as a GAP for Rab3 proteins by converting active RAB3-GTP to the inactive form RAB3-GDP. Rab3 proteins are involved in regulated exocytosis of neurotransmitters and hormones. The Rab3GAP complex, acts as a GEF for RAB18 by promoting the conversion of inactive RAB18-GDP to the active form RAB18-GTP. Recruits and stabilizes RAB18 at the cis-Golgi membrane where RAB18 is most likely activated. Also involved in RAB18 recruitment at the endoplasmic reticulum (ER) membrane where it maintains proper ER structure. Required for normal eye and brain development. May participate in neurodevelopmental processes such as proliferation, migration and differentiation before synapse formation, and non-synaptic vesicular release of neurotransmitters. The protein is Rab3 GTPase-activating protein catalytic subunit (rab3gap1) of Danio rerio (Zebrafish).